The primary structure comprises 293 residues: N-acetylmannosamine kinase (293 aa).

ATP is bound by residues 5–12 and 133–140; these read AIDIGGTK and GVGGGLVI. Zn(2+)-binding residues include His-157, Cys-167, Cys-169, and Cys-174.

It belongs to the ROK (NagC/XylR) family. NanK subfamily. As to quaternary structure, homodimer.

It catalyses the reaction an N-acyl-D-mannosamine + ATP = an N-acyl-D-mannosamine 6-phosphate + ADP + H(+). It functions in the pathway amino-sugar metabolism; N-acetylneuraminate degradation; D-fructose 6-phosphate from N-acetylneuraminate: step 2/5. Catalyzes the phosphorylation of N-acetylmannosamine (ManNAc) to ManNAc-6-P. The protein is N-acetylmannosamine kinase of Vibrio vulnificus (strain YJ016).